The following is a 254-amino-acid chain: Low affinity immunoglobulin gamma Fc region receptor III-A (254 aa).

The N-terminal stretch at 1-16 (MWQLLLPTALLLLVSA) is a signal peptide. Topologically, residues 17 to 208 (GMRTEDLPKA…ISSFFPPGYQ (192 aa)) are extracellular. Ig-like C2-type domains follow at residues 24–105 (PKAV…LEVH) and 107–189 (GWLL…VNIT). The cysteines at positions 47 and 89 are disulfide-linked. N-linked (GlcNAc...) asparagine glycans are attached at residues N56, N63, and N92. The cysteines at positions 128 and 172 are disulfide-linked. Residues N180 and N187 are each glycosylated (N-linked (GlcNAc...) asparagine). The helical transmembrane segment at 209–229 (VSFCLVMVLLFAVDTGLYFSV) threads the bilayer. Topologically, residues 230–254 (KTNIRSSTRDWKDHKFKWRKDPQDK) are cytoplasmic. S236 carries the phosphoserine; by PKC modification. At T237 the chain carries Phosphothreonine; by PKC.

In terms of assembly, forms a heterooligomeric complex with ITAM-containing signaling subunits, either a homodimer of CD247, a homodimer of FCER1G or a heterodimer of CD247 and FCER1G. Interacts (via transmembrane domain) with signaling subunits; this interaction is a prerequisite for receptor complex expression on the cell surface and intracellular signal transduction. Binds the Fc region of antigen-complexed IgG with a preference for IgG1 and IgG3 isotypes. Interacts with CD2; this interaction is involved in NK cell activation and cytotoxicity. Interacts with S100A4; this interaction inhibits PKC-dependent phosphorylation of FCGR3A. Post-translationally, glycosylated. Contains high mannose- and complex-type oligosaccharides. Glycosylation at Asn-180 is mandatory for high affinity binding to the Fc and for discrimination between fucosylated and afucosylated IgG glycoforms. Undergoes rapid ectodomain shedding upon NK cell stimulation. The soluble form is produced by a proteolytic cleavage mediated by ADAM17. Repeated stimulation causes receptor shedding, a mechanism that allows for increased NK cell motility and detachment from opsonized target cells while avoiding activation-induced NK cell apoptosis. In terms of processing, phosphorylated at RSSTR motif by PKC. The relevant physiological PKCs might be PRKCI, PRKCG, PRKCE, PRKCH and PRKCQ. In terms of tissue distribution, expressed in natural killer cells (at protein level). Expressed in a subset of circulating monocytes (at protein level).

The protein resides in the cell membrane. It localises to the secreted. Its function is as follows. Receptor for the invariable Fc fragment of immunoglobulin gamma (IgG). Optimally activated upon binding of clustered antigen-IgG complexes displayed on cell surfaces, triggers lysis of antibody-coated cells, a process known as antibody-dependent cellular cytotoxicity (ADCC). Does not bind free monomeric IgG, thus avoiding inappropriate effector cell activation in the absence of antigenic trigger. Mediates IgG effector functions on natural killer (NK) cells. Binds antigen-IgG complexes generated upon infection and triggers NK cell-dependent cytokine production and degranulation to limit viral load and propagation. Involved in the generation of memory-like adaptive NK cells capable to produce high amounts of IFNG and to efficiently eliminate virus-infected cells via ADCC. Regulates NK cell survival and proliferation, in particular by preventing NK cell progenitor apoptosis. Fc-binding subunit that associates with CD247 and/or FCER1G adapters to form functional signaling complexes. Following the engagement of antigen-IgG complexes, triggers phosphorylation of immunoreceptor tyrosine-based activation motif (ITAM)-containing adapters with subsequent activation of phosphatidylinositol 3-kinase signaling and sustained elevation of intracellular calcium that ultimately drive NK cell activation. The ITAM-dependent signaling coupled to receptor phosphorylation by PKC mediates robust intracellular calcium flux that leads to production of pro-inflammatory cytokines, whereas in the absence of receptor phosphorylation it mainly activates phosphatidylinositol 3-kinase signaling leading to cell degranulation. Costimulates NK cells and trigger lysis of target cells independently of IgG binding. Mediates the antitumor activities of therapeutic antibodies. Upon ligation on monocytes triggers TNFA-dependent ADCC of IgG-coated tumor cells. Mediates enhanced ADCC in response to afucosylated IgGs. (Microbial infection) Involved in Dengue virus pathogenesis via antibody-dependent enhancement (ADE) mechanism. Secondary infection with Dengue virus triggers elevated levels of afucosylated non-neutralizing IgG1s with reactivity to viral envelope/E protein. Viral antigen-IgG1 complexes bind with high affinity to FCGR3A, facilitating virus entry in myeloid cells and subsequent viral replication. The polypeptide is Low affinity immunoglobulin gamma Fc region receptor III-A (Homo sapiens (Human)).